The sequence spans 360 residues: uncharacterized protein (360 aa).

The region spanning 4-235 (LSLQHIQKIY…PANMFVSGFI (232 aa)) is the ABC transporter domain. 37-44 (GPSGCGKS) lines the ATP pocket.

This sequence belongs to the ABC transporter superfamily.

This is an uncharacterized protein from Escherichia coli (strain K12).